A 739-amino-acid polypeptide reads, in one-letter code: MFDVQREELMWGDRKLVLETGKVARQADGAVIATYGETSVLATVVAAKEPKPGIDFMPLTVNYQERAYAAGRIPGGYFKREGRPSEKETLVSRLIDRPIRPLFIEGWRNDTQVVVTVLTHDLENDPDIVAMVAASAALTLSGVPFMGPIGGARVGYINGGYRLNPLVTETKEESSLDLVVAGTQDAVLMVESEAKELSEDVMLGAVMFGHKHFQPVIEAIIRLAEKAAKEPRDFKAPENADVEKAVLEVCEAELRAAYTKTVKQERYAAVDAVKAKVMAALCPEGAEKFPAEKVKAAFKEAQSKVVRWNILDSGARIDGRDVKTVRSILSEVGVLPRAHGSALFTRGETQALVVATLGTGEDEQFIDALEGTYKERFLLHYNFPPYSVGETGRMGSPGRREIGHGKLAWRAIRPVLPPAHEFPYTIRVVSEITESNGSSSMASVCGGSLSLMDAGVPLRRPVAGIAMGLILEGERFAVLSDILGDEDHLGDMDFKVAGTDEGVTSLQMDIKIAGITEEIMKIALAQAKDGRAHILAEMAKALTAARPELGEYAPRIETMQIPTDKIRDVIGTGGKVIREIVEKTGAKINIEDTGVVKIASADGKAIKAAYNWIRSIVAEPEVGVIYDGTIVKCMEFGAFVNFFGAKDGLVHISELAAQRVAKVQDVVKEGDKVKVKFLGQDDRGKIRLSMKVVDQQTGEDITDKIKAQRDAERAERGDEPREPREGGRHRGERRREAGE.

The Mg(2+) site is built by D487 and D493. Residues 554-613 (PRIETMQIPTDKIRDVIGTGGKVIREIVEKTGAKINIEDTGVVKIASADGKAIKAAYNWI) form the KH domain. An S1 motif domain is found at 623 to 691 (GVIYDGTIVK…DRGKIRLSMK (69 aa)). Positions 694–739 (DQQTGEDITDKIKAQRDAERAERGDEPREPREGGRHRGERRREAGE) are disordered. Basic and acidic residues predominate over residues 701 to 739 (ITDKIKAQRDAERAERGDEPREPREGGRHRGERRREAGE).

Belongs to the polyribonucleotide nucleotidyltransferase family. Requires Mg(2+) as cofactor.

It is found in the cytoplasm. The catalysed reaction is RNA(n+1) + phosphate = RNA(n) + a ribonucleoside 5'-diphosphate. Involved in mRNA degradation. Catalyzes the phosphorolysis of single-stranded polyribonucleotides processively in the 3'- to 5'-direction. This is Polyribonucleotide nucleotidyltransferase from Methylobacterium radiotolerans (strain ATCC 27329 / DSM 1819 / JCM 2831 / NBRC 15690 / NCIMB 10815 / 0-1).